Consider the following 120-residue polypeptide: Large ribosomal subunit protein eL8 (120 aa).

It belongs to the eukaryotic ribosomal protein eL8 family. In terms of assembly, part of the 50S ribosomal subunit. Probably part of the RNase P complex.

Its subcellular location is the cytoplasm. In terms of biological role, multifunctional RNA-binding protein that recognizes the K-turn motif in ribosomal RNA, the RNA component of RNase P, box H/ACA, box C/D and box C'/D' sRNAs. The polypeptide is Large ribosomal subunit protein eL8 (Natronomonas pharaonis (strain ATCC 35678 / DSM 2160 / CIP 103997 / JCM 8858 / NBRC 14720 / NCIMB 2260 / Gabara) (Halobacterium pharaonis)).